The sequence spans 148 residues: 3-dehydroquinate dehydratase (148 aa).

Tyr-23 acts as the Proton acceptor in catalysis. Substrate-binding residues include Asn-74, His-80, and Asp-87. The Proton donor role is filled by His-100. Substrate is bound by residues Ile-101 to Ser-102 and Arg-111.

It belongs to the type-II 3-dehydroquinase family. As to quaternary structure, homododecamer.

The catalysed reaction is 3-dehydroquinate = 3-dehydroshikimate + H2O. It functions in the pathway metabolic intermediate biosynthesis; chorismate biosynthesis; chorismate from D-erythrose 4-phosphate and phosphoenolpyruvate: step 3/7. Catalyzes a trans-dehydration via an enolate intermediate. The protein is 3-dehydroquinate dehydratase of Anoxybacillus flavithermus (strain DSM 21510 / WK1).